The primary structure comprises 147 residues: Large ribosomal subunit protein uL15 (147 aa).

Positions 1–46 (MSIRLENLSYTPGARKEKHRKGRGHAAGKGKQAGRGQSGQKKRSTV) are disordered. Over residues 16-28 (KEKHRKGRGHAAG) the composition is skewed to basic residues.

The protein belongs to the universal ribosomal protein uL15 family. In terms of assembly, part of the 50S ribosomal subunit.

In terms of biological role, binds to the 23S rRNA. This Mesomycoplasma hyopneumoniae (strain 232) (Mycoplasma hyopneumoniae) protein is Large ribosomal subunit protein uL15.